We begin with the raw amino-acid sequence, 244 residues long: Pyridoxine 5'-phosphate synthase (244 aa).

Residue Asn-7 coordinates 3-amino-2-oxopropyl phosphate. Residue 9 to 10 (DH) coordinates 1-deoxy-D-xylulose 5-phosphate. Arg-18 lines the 3-amino-2-oxopropyl phosphate pocket. The active-site Proton acceptor is His-43. Arg-45 and His-50 together coordinate 1-deoxy-D-xylulose 5-phosphate. Glu-70 (proton acceptor) is an active-site residue. Thr-100 contacts 1-deoxy-D-xylulose 5-phosphate. His-191 functions as the Proton donor in the catalytic mechanism. Residues Gly-192 and 213-214 (GH) each bind 3-amino-2-oxopropyl phosphate.

This sequence belongs to the PNP synthase family. Homooctamer; tetramer of dimers.

Its subcellular location is the cytoplasm. The catalysed reaction is 3-amino-2-oxopropyl phosphate + 1-deoxy-D-xylulose 5-phosphate = pyridoxine 5'-phosphate + phosphate + 2 H2O + H(+). Its pathway is cofactor biosynthesis; pyridoxine 5'-phosphate biosynthesis; pyridoxine 5'-phosphate from D-erythrose 4-phosphate: step 5/5. Its function is as follows. Catalyzes the complicated ring closure reaction between the two acyclic compounds 1-deoxy-D-xylulose-5-phosphate (DXP) and 3-amino-2-oxopropyl phosphate (1-amino-acetone-3-phosphate or AAP) to form pyridoxine 5'-phosphate (PNP) and inorganic phosphate. The chain is Pyridoxine 5'-phosphate synthase from Laribacter hongkongensis (strain HLHK9).